The sequence spans 277 residues: Large ribosomal subunit protein uL2 (277 aa).

The tract at residues 222-277 (GSVMNPNDHPHGGGEGKAPVGRKAPSTPWGKPALGLKTRNKKAKSDKLIVRRRNEK) is disordered. The span at 264 to 277 (AKSDKLIVRRRNEK) shows a compositional bias: basic and acidic residues.

The protein belongs to the universal ribosomal protein uL2 family. As to quaternary structure, part of the 50S ribosomal subunit. Forms a bridge to the 30S subunit in the 70S ribosome.

Functionally, one of the primary rRNA binding proteins. Required for association of the 30S and 50S subunits to form the 70S ribosome, for tRNA binding and peptide bond formation. It has been suggested to have peptidyltransferase activity; this is somewhat controversial. Makes several contacts with the 16S rRNA in the 70S ribosome. The sequence is that of Large ribosomal subunit protein uL2 from Streptococcus thermophilus (strain CNRZ 1066).